We begin with the raw amino-acid sequence, 247 residues long: Probable transcriptional regulatory protein TDE_1487 (247 aa).

Belongs to the TACO1 family.

It is found in the cytoplasm. This chain is Probable transcriptional regulatory protein TDE_1487, found in Treponema denticola (strain ATCC 35405 / DSM 14222 / CIP 103919 / JCM 8153 / KCTC 15104).